Here is a 377-residue protein sequence, read N- to C-terminus: RING-H2 finger protein ATL22 (377 aa).

Positions 1 to 23 are cleaved as a signal peptide; the sequence is MTSKLLPLLLNLIFLFFFPLLNA. A helical membrane pass occupies residues 244-264; that stretch reads IMCLSLVGPLTALTFCVGLVM. An RING-type; atypical zinc finger spans residues 327–369; that stretch reads CPICLSEYATKETVRCLPECEHCFHTECIDAWLKLHSSCPVCR.

It belongs to the RING-type zinc finger family. ATL subfamily.

The protein localises to the membrane. The enzyme catalyses S-ubiquitinyl-[E2 ubiquitin-conjugating enzyme]-L-cysteine + [acceptor protein]-L-lysine = [E2 ubiquitin-conjugating enzyme]-L-cysteine + N(6)-ubiquitinyl-[acceptor protein]-L-lysine.. Its pathway is protein modification; protein ubiquitination. The protein is RING-H2 finger protein ATL22 (ATL22) of Arabidopsis thaliana (Mouse-ear cress).